The sequence spans 414 residues: Acetate kinase (414 aa).

Asn-7 provides a ligand contact to Mg(2+). Lys-14 provides a ligand contact to ATP. Arg-99 contacts substrate. The active-site Proton donor/acceptor is Asp-157. Residues His-217–Gly-221 and Gly-341–Asn-345 contribute to the ATP site. Residue Glu-395 coordinates Mg(2+).

It belongs to the acetokinase family. In terms of assembly, homodimer. The cofactor is Mg(2+). Mn(2+) serves as cofactor.

Its subcellular location is the cytoplasm. The catalysed reaction is acetate + ATP = acetyl phosphate + ADP. It functions in the pathway metabolic intermediate biosynthesis; acetyl-CoA biosynthesis; acetyl-CoA from acetate: step 1/2. Functionally, catalyzes the formation of acetyl phosphate from acetate and ATP. Can also catalyze the reverse reaction. The sequence is that of Acetate kinase from Solibacter usitatus (strain Ellin6076).